The chain runs to 57 residues: Small ribosomal subunit protein bS21 (57 aa).

This sequence belongs to the bacterial ribosomal protein bS21 family.

The polypeptide is Small ribosomal subunit protein bS21 (Bacillus cytotoxicus (strain DSM 22905 / CIP 110041 / 391-98 / NVH 391-98)).